The following is a 155-amino-acid chain: DNA gyrase inhibitor (155 aa).

This sequence belongs to the DNA gyrase inhibitor family. Interacts with DNA gyrase.

The protein resides in the cytoplasm. Inhibits the supercoiling activity of DNA gyrase. Acts by inhibiting DNA gyrase at an early step, prior to (or at the step of) binding of DNA by the gyrase. It protects cells against toxins that target DNA gyrase, by inhibiting activity of these toxins and reducing the formation of lethal double-strand breaks in the cell. The sequence is that of DNA gyrase inhibitor from Salmonella arizonae (strain ATCC BAA-731 / CDC346-86 / RSK2980).